Reading from the N-terminus, the 535-residue chain is Butyrophilin-like protein 9 (535 aa).

Residues 1-34 (MVDLSVSPDSLKPVSLTSSLVFLMHLLLLQPGEP) form the signal peptide. Residues 35 to 256 (SSEVKVLGPE…VFVPGASAWK (222 aa)) lie on the Extracellular side of the membrane. Residues 54–135 (EVEFPCHLWP…SDKGTYGCRF (82 aa)) form the Ig-like V-type domain. A disulfide bridge links C59 with C133. Residues N102, N139, and N224 are each glycosylated (N-linked (GlcNAc...) asparagine). Residues 257–277 (SAFVATLPLLLVLAALALGVL) form a helical membrane-spanning segment. Positions 276–315 (VLRKQRRSREKLRKQAEKRQEKLTAELEKLQTELDWRRAE) form a coiled coil. Topologically, residues 278–535 (RKQRRSREKL…EPADPALDWW (258 aa)) are cytoplasmic. The B30.2/SPRY domain occupies 310-509 (DWRRAEGQAE…LTICPLPVRG (200 aa)). Residues 340–367 (SLEVSEDGKSVSSRGAPPGPAPGHPQRF) are disordered.

This sequence belongs to the immunoglobulin superfamily. BTN/MOG family.

The protein localises to the membrane. This Homo sapiens (Human) protein is Butyrophilin-like protein 9 (BTNL9).